Here is a 445-residue protein sequence, read N- to C-terminus: Tubulin beta-2B chain (445 aa).

Positions 1–4 match the MREI motif motif; the sequence is MREI. Gln-11 serves as a coordination point for GTP. Position 40 is a phosphoserine (Ser-40). Thr-55 is modified (phosphothreonine). N6-acetyllysine; alternate is present on Lys-58. An N6-succinyllysine; alternate modification is found at Lys-58. Lys-58 participates in a covalent cross-link: Glycyl lysine isopeptide (Lys-Gly) (interchain with G-Cter in ubiquitin); alternate. GTP contacts are provided by Glu-69, Ser-138, Gly-142, Thr-143, and Gly-144. Residue Glu-69 participates in Mg(2+) binding. Ser-172 bears the Phosphoserine; by CDK1 mark. Residues Asn-204 and Asn-226 each contribute to the GTP site. 2 positions are modified to phosphothreonine: Thr-285 and Thr-290. The residue at position 318 (Arg-318) is an Omega-N-methylarginine. Lys-324 is covalently cross-linked (Glycyl lysine isopeptide (Lys-Gly) (interchain with G-Cter in ubiquitin)). Residues 422–445 form a disordered region; the sequence is YQQYQDATADEQGEFEEEEGEDEA. The segment covering 429–445 has biased composition (acidic residues); that stretch reads TADEQGEFEEEEGEDEA. At Glu-438 the chain carries 5-glutamyl polyglutamate.

This sequence belongs to the tubulin family. As to quaternary structure, dimer of alpha and beta chains. A typical microtubule is a hollow water-filled tube with an outer diameter of 25 nm and an inner diameter of 15 nM. Alpha-beta heterodimers associate head-to-tail to form protofilaments running lengthwise along the microtubule wall with the beta-tubulin subunit facing the microtubule plus end conferring a structural polarity. Microtubules usually have 13 protofilaments but different protofilament numbers can be found in some organisms and specialized cells. Mg(2+) serves as cofactor. Post-translationally, some glutamate residues at the C-terminus are polyglycylated, resulting in polyglycine chains on the gamma-carboxyl group. Glycylation is mainly limited to tubulin incorporated into axonemes (cilia and flagella) whereas glutamylation is prevalent in neuronal cells, centrioles, axonemes, and the mitotic spindle. Both modifications can coexist on the same protein on adjacent residues, and lowering polyglycylation levels increases polyglutamylation, and reciprocally. The precise function of polyglycylation is still unclear. In terms of processing, some glutamate residues at the C-terminus are polyglutamylated, resulting in polyglutamate chains on the gamma-carboxyl group. Polyglutamylation plays a key role in microtubule severing by spastin (SPAST). SPAST preferentially recognizes and acts on microtubules decorated with short polyglutamate tails: severing activity by SPAST increases as the number of glutamates per tubulin rises from one to eight, but decreases beyond this glutamylation threshold. Phosphorylated on Ser-172 by CDK1 during the cell cycle, from metaphase to telophase, but not in interphase. This phosphorylation inhibits tubulin incorporation into microtubules.

The protein localises to the cytoplasm. The protein resides in the cytoskeleton. Tubulin is the major constituent of microtubules, a cylinder consisting of laterally associated linear protofilaments composed of alpha- and beta-tubulin heterodimers. Microtubules grow by the addition of GTP-tubulin dimers to the microtubule end, where a stabilizing cap forms. Below the cap, tubulin dimers are in GDP-bound state, owing to GTPase activity of alpha-tubulin. Implicated in neuronal migration. In Bos taurus (Bovine), this protein is Tubulin beta-2B chain (TUBB2B).